The following is a 191-amino-acid chain: Large ribosomal subunit protein uL5 (191 aa).

It belongs to the universal ribosomal protein uL5 family. Part of the 50S ribosomal subunit; part of the 5S rRNA/L5/L18/L25 subcomplex. Contacts the 5S rRNA and the P site tRNA. Forms a bridge to the 30S subunit in the 70S ribosome.

Its function is as follows. This is one of the proteins that bind and probably mediate the attachment of the 5S RNA into the large ribosomal subunit, where it forms part of the central protuberance. In the 70S ribosome it contacts protein S13 of the 30S subunit (bridge B1b), connecting the 2 subunits; this bridge is implicated in subunit movement. Contacts the P site tRNA; the 5S rRNA and some of its associated proteins might help stabilize positioning of ribosome-bound tRNAs. The sequence is that of Large ribosomal subunit protein uL5 from Micrococcus luteus (strain ATCC 4698 / DSM 20030 / JCM 1464 / CCM 169 / CCUG 5858 / IAM 1056 / NBRC 3333 / NCIMB 9278 / NCTC 2665 / VKM Ac-2230) (Micrococcus lysodeikticus).